We begin with the raw amino-acid sequence, 92 residues long: Small ribosomal subunit protein uS19 (92 aa).

Belongs to the universal ribosomal protein uS19 family.

In terms of biological role, protein S19 forms a complex with S13 that binds strongly to the 16S ribosomal RNA. The polypeptide is Small ribosomal subunit protein uS19 (Mesorhizobium japonicum (strain LMG 29417 / CECT 9101 / MAFF 303099) (Mesorhizobium loti (strain MAFF 303099))).